The chain runs to 196 residues: Small ribosomal subunit protein uS4c (196 aa).

The segment at 16 to 36 is disordered; sequence GTLPGLTSKRPKSGSDLKTQL. The region spanning 89-150 is the S4 RNA-binding domain; sequence MRLDNILFRL…KQRSKALIQN (62 aa).

It belongs to the universal ribosomal protein uS4 family. As to quaternary structure, part of the 30S ribosomal subunit. Contacts protein S5. The interaction surface between S4 and S5 is involved in control of translational fidelity.

The protein resides in the plastid. Its subcellular location is the chloroplast. Its function is as follows. One of the primary rRNA binding proteins, it binds directly to 16S rRNA where it nucleates assembly of the body of the 30S subunit. In terms of biological role, with S5 and S12 plays an important role in translational accuracy. The sequence is that of Small ribosomal subunit protein uS4c (rps4) from Rhapis humilis (Slender lady palm).